The following is a 106-amino-acid chain: Urease subunit beta (106 aa).

The protein belongs to the urease beta subunit family. In terms of assembly, heterotrimer of UreA (gamma), UreB (beta) and UreC (alpha) subunits. Three heterotrimers associate to form the active enzyme.

Its subcellular location is the cytoplasm. It carries out the reaction urea + 2 H2O + H(+) = hydrogencarbonate + 2 NH4(+). The protein operates within nitrogen metabolism; urea degradation; CO(2) and NH(3) from urea (urease route): step 1/1. The sequence is that of Urease subunit beta from Alkalilimnicola ehrlichii (strain ATCC BAA-1101 / DSM 17681 / MLHE-1).